The primary structure comprises 432 residues: Adenosylhomocysteinase (432 aa).

The tract at residues 1-24 (MSAYSPLSAQLDADTDVDVESTRT) is disordered. The substrate site is built by Asp137 and Glu162. Residue 163-165 (TTT) coordinates NAD(+). Substrate-binding residues include Lys192 and Asp196. Residues Asn197, 226–231 (GYGYCG), Glu249, Asn284, 305–307 (AGH), and Asn352 each bind NAD(+).

Belongs to the adenosylhomocysteinase family. Requires NAD(+) as cofactor.

The protein localises to the cytoplasm. It carries out the reaction S-adenosyl-L-homocysteine + H2O = L-homocysteine + adenosine. The protein operates within amino-acid biosynthesis; L-homocysteine biosynthesis; L-homocysteine from S-adenosyl-L-homocysteine: step 1/1. In terms of biological role, may play a key role in the regulation of the intracellular concentration of adenosylhomocysteine. In Haloquadratum walsbyi (strain DSM 16854 / JCM 12705 / C23), this protein is Adenosylhomocysteinase.